Here is a 615-residue protein sequence, read N- to C-terminus: Hypermethylated in cancer 2 protein (615 aa).

In terms of domain architecture, BTB spans 46 to 109; that stretch reads CDVIIMVENS…IYTGKLLPSD (64 aa). The tract at residues 144–167 is disordered; sequence KPFGSGRAGSTGMGRPPRSQRLST. Residues Ser166, Ser169, and Ser197 each carry the phosphoserine modification. Disordered stretches follow at residues 182–208 and 229–421; these read RKGAHAPQELPQAKGSDDELFLGGSNQ and GCSS…SGHA. The interval 246-250 is binding to CtBP; it reads GLDLS. The segment covering 280–296 has biased composition (low complexity); the sequence is SPPAASAPPVANSASYS. Positions 336-356 are enriched in basic and acidic residues; sequence KKEWGKKEPVAGSPFERREAG. Ser348 bears the Phosphoserine mark. The span at 379–388 shows a compositional bias: low complexity; it reads ASGAGPSGPY. Ser412 carries the phosphoserine modification. 5 consecutive C2H2-type zinc fingers follow at residues 442-469, 505-532, 533-560, 561-588, and 589-615; these read YVCIPCAKGFPSSEQLNAHVETHTEEEL, FKCSVCEKTYKDPATLRQHEKTHWLTRP, FPCNICGKMFTQRGTMTRHMRSHLGLKP, FACDECGMRFTRQYRLTEHMRVHSGEKP, and YECQLCGGKFTQQRNLISHLRMHTSPS.

This sequence belongs to the krueppel C2H2-type zinc-finger protein family. Hic subfamily. In terms of assembly, self-associates. Interacts with HIC1. In terms of tissue distribution, highest levels in cerebellum.

Its subcellular location is the nucleus. Functionally, transcriptional repressor. The chain is Hypermethylated in cancer 2 protein (HIC2) from Homo sapiens (Human).